A 187-amino-acid chain; its full sequence is Peptidoglycan-recognition protein 2 (187 aa).

Residues Met-1–Ala-19 form the signal peptide. Disulfide bonds link Cys-21/Cys-144 and Cys-58/Cys-64. An N-acetylmuramoyl-L-alanine amidase domain is found at Lys-43–Gly-170.

This sequence belongs to the N-acetylmuramoyl-L-alanine amidase 2 family. As to expression, localizes to plasma (at protein level).

The protein resides in the secreted. Peptidoglycan-recognition protein probably involved in innate immunity by binding to peptidoglycans (PGN) of bacteria and activating the prophenoloxidase (proPO) cascade immune response. Binds to 1,3-beta-D-glucan and PGN. The sequence is that of Peptidoglycan-recognition protein 2 (PGRP-2) from Holotrichia diomphalia (Korean black chafer).